A 97-amino-acid polypeptide reads, in one-letter code: MSTPNALAAFNSSPSLNAPEGITNPPIDDLLEQVSSKYALVIYSAKRARQINDYYAQLGEGLLEYVGPLVEPGPREKPLSIALREIHAGVLEHTEGE.

Residues 1 to 16 are compositionally biased toward polar residues; sequence MSTPNALAAFNSSPSL. A disordered region spans residues 1–21; sequence MSTPNALAAFNSSPSLNAPEG.

This sequence belongs to the RNA polymerase subunit omega family. As to quaternary structure, the RNAP catalytic core consists of 2 alpha, 1 beta, 1 beta' and 1 omega subunit. When a sigma factor is associated with the core the holoenzyme is formed, which can initiate transcription.

It carries out the reaction RNA(n) + a ribonucleoside 5'-triphosphate = RNA(n+1) + diphosphate. In terms of biological role, promotes RNA polymerase assembly. Latches the N- and C-terminal regions of the beta' subunit thereby facilitating its interaction with the beta and alpha subunits. In Saccharopolyspora erythraea (strain ATCC 11635 / DSM 40517 / JCM 4748 / NBRC 13426 / NCIMB 8594 / NRRL 2338), this protein is DNA-directed RNA polymerase subunit omega.